The chain runs to 130 residues: Large ribosomal subunit protein bL19 (130 aa).

Belongs to the bacterial ribosomal protein bL19 family.

In terms of biological role, this protein is located at the 30S-50S ribosomal subunit interface and may play a role in the structure and function of the aminoacyl-tRNA binding site. The chain is Large ribosomal subunit protein bL19 from Mycoplasma mycoides subsp. mycoides SC (strain CCUG 32753 / NCTC 10114 / PG1).